Consider the following 693-residue polypeptide: Elongation factor G (693 aa).

Residues 8–282 (AKTRNIGIMA…AVIDYLPSPL (275 aa)) enclose the tr-type G domain. GTP is bound by residues 17-24 (AHVDAGKT), 81-85 (DTPGH), and 135-138 (NKMD).

Belongs to the TRAFAC class translation factor GTPase superfamily. Classic translation factor GTPase family. EF-G/EF-2 subfamily.

Its subcellular location is the cytoplasm. Catalyzes the GTP-dependent ribosomal translocation step during translation elongation. During this step, the ribosome changes from the pre-translocational (PRE) to the post-translocational (POST) state as the newly formed A-site-bound peptidyl-tRNA and P-site-bound deacylated tRNA move to the P and E sites, respectively. Catalyzes the coordinated movement of the two tRNA molecules, the mRNA and conformational changes in the ribosome. This Streptococcus thermophilus (strain CNRZ 1066) protein is Elongation factor G.